A 532-amino-acid chain; its full sequence is Zinc metalloproteinase nas-29 (532 aa).

Residues 1 to 22 form the signal peptide; the sequence is MISKNTSFCGFLILVLATCMSA. N-linked (GlcNAc...) asparagine glycans are attached at residues N5, N27, N70, and N106. Residues 23-134 constitute a propeptide that is removed on maturation; that stretch reads QFVSNESIKL…NGESTDRTKR (112 aa). Residues 135-335 form the Peptidase M12A domain; the sequence is QAYLDNNYPA…HIMNQHYQCQ (201 aa). 6 disulfides stabilise this stretch: C179-C334, C201-C222, C338-C358, C360-C369, C380-C408, and C435-C456. Zn(2+) is bound at residue H230. Residue E231 is part of the active site. Residues H234 and H240 each contribute to the Zn(2+) site. Positions 330-370 constitute an EGF-like domain; it reads QHYQCQEKCPTQAPCQNGGFTNSRNCKVCKCPTGFGGAYCQ. Residues 380–494 form the CUB domain; that stretch reads CGGYLNAEET…VSFEYSFVST (115 aa). N503 carries N-linked (GlcNAc...) asparagine glycosylation.

It depends on Zn(2+) as a cofactor.

It localises to the secreted. Metalloprotease. The polypeptide is Zinc metalloproteinase nas-29 (nas-29) (Caenorhabditis elegans).